The following is a 188-amino-acid chain: NADH-quinone oxidoreductase subunit B (188 aa).

The [4Fe-4S] cluster site is built by Cys-67, Cys-68, Cys-132, and Cys-162.

This sequence belongs to the complex I 20 kDa subunit family. In terms of assembly, NDH-1 is composed of 14 different subunits. Subunits NuoB, C, D, E, F, and G constitute the peripheral sector of the complex. [4Fe-4S] cluster is required as a cofactor.

The protein localises to the cell inner membrane. The catalysed reaction is a quinone + NADH + 5 H(+)(in) = a quinol + NAD(+) + 4 H(+)(out). In terms of biological role, NDH-1 shuttles electrons from NADH, via FMN and iron-sulfur (Fe-S) centers, to quinones in the respiratory chain. Couples the redox reaction to proton translocation (for every two electrons transferred, four hydrogen ions are translocated across the cytoplasmic membrane), and thus conserves the redox energy in a proton gradient. This Maricaulis maris (strain MCS10) (Caulobacter maris) protein is NADH-quinone oxidoreductase subunit B.